A 340-amino-acid polypeptide reads, in one-letter code: Ketol-acid reductoisomerase (NADP(+)) (340 aa).

One can recognise a KARI N-terminal Rossmann domain in the interval 1 to 182; sequence MRVYYDRDCD…GGGRSGIIET (182 aa). Residues 24 to 27, Arg-48, Ser-51, Ser-53, and 83 to 86 each bind NADP(+); these read YGSQ and DELQ. His-108 is an active-site residue. Gly-134 is a binding site for NADP(+). Positions 183 to 329 constitute a KARI C-terminal knotted domain; it reads NFREECETDL…ETLRGMMPWI (147 aa). The Mg(2+) site is built by Asp-191, Glu-195, Glu-227, and Glu-231. Ser-252 lines the substrate pocket.

This sequence belongs to the ketol-acid reductoisomerase family. It depends on Mg(2+) as a cofactor.

The enzyme catalyses (2R)-2,3-dihydroxy-3-methylbutanoate + NADP(+) = (2S)-2-acetolactate + NADPH + H(+). It catalyses the reaction (2R,3R)-2,3-dihydroxy-3-methylpentanoate + NADP(+) = (S)-2-ethyl-2-hydroxy-3-oxobutanoate + NADPH + H(+). It participates in amino-acid biosynthesis; L-isoleucine biosynthesis; L-isoleucine from 2-oxobutanoate: step 2/4. The protein operates within amino-acid biosynthesis; L-valine biosynthesis; L-valine from pyruvate: step 2/4. Its function is as follows. Involved in the biosynthesis of branched-chain amino acids (BCAA). Catalyzes an alkyl-migration followed by a ketol-acid reduction of (S)-2-acetolactate (S2AL) to yield (R)-2,3-dihydroxy-isovalerate. In the isomerase reaction, S2AL is rearranged via a Mg-dependent methyl migration to produce 3-hydroxy-3-methyl-2-ketobutyrate (HMKB). In the reductase reaction, this 2-ketoacid undergoes a metal-dependent reduction by NADPH to yield (R)-2,3-dihydroxy-isovalerate. This chain is Ketol-acid reductoisomerase (NADP(+)), found in Roseobacter denitrificans (strain ATCC 33942 / OCh 114) (Erythrobacter sp. (strain OCh 114)).